The sequence spans 124 residues: Fluoride-specific ion channel FluC (124 aa).

Helical transmembrane passes span 4–24, 35–55, 60–80, and 102–122; these read LLLV…ISIF, FGTL…YALG, ISPE…TTFS, and VVLN…LVFS. Gly-74 and Thr-77 together coordinate Na(+).

This sequence belongs to the fluoride channel Fluc/FEX (TC 1.A.43) family.

The protein resides in the cell inner membrane. It catalyses the reaction fluoride(in) = fluoride(out). Na(+) is not transported, but it plays an essential structural role and its presence is essential for fluoride channel function. Fluoride-specific ion channel. Important for reducing fluoride concentration in the cell, thus reducing its toxicity. In Shewanella baltica (strain OS223), this protein is Fluoride-specific ion channel FluC.